The primary structure comprises 494 residues: UPF0371 protein SPCG_0344 (494 aa).

Belongs to the UPF0371 family.

In Streptococcus pneumoniae (strain CGSP14), this protein is UPF0371 protein SPCG_0344.